The following is a 143-amino-acid chain: Large-conductance mechanosensitive channel (143 aa).

2 helical membrane passes run phenylalanine 10–serine 30 and glycine 89–valine 109.

Belongs to the MscL family. Homopentamer.

It localises to the cell inner membrane. Functionally, channel that opens in response to stretch forces in the membrane lipid bilayer. May participate in the regulation of osmotic pressure changes within the cell. This chain is Large-conductance mechanosensitive channel, found in Burkholderia pseudomallei (strain 668).